We begin with the raw amino-acid sequence, 55 residues long: Large ribosomal subunit protein bL33 (55 aa).

It belongs to the bacterial ribosomal protein bL33 family.

In Parvibaculum lavamentivorans (strain DS-1 / DSM 13023 / NCIMB 13966), this protein is Large ribosomal subunit protein bL33.